Reading from the N-terminus, the 166-residue chain is MSDQDALDTQEKELLEMKERVAEMEAEAAKLRAMQEQLDNETEALRNDKESIDAQSVYVGNVDYSVTPEELQSHFASCGSVNRVTILCDKFTGHPKGFAYIEFSEPSLVPNALLLNGSMLHERPLKVTPKRTNVPGMSRGRGRGRGRGRGRGRGGYRGRARGFAPY.

An RRM domain is found at 55–132 (QSVYVGNVDY…RPLKVTPKRT (78 aa)). Residues 129-166 (PKRTNVPGMSRGRGRGRGRGRGRGRGGYRGRARGFAPY) are disordered. The span at 140–160 (GRGRGRGRGRGRGRGGYRGRA) shows a compositional bias: basic residues.

The protein resides in the nucleus. The polypeptide is Polyadenylate-binding protein 2 (pab2) (Schizosaccharomyces pombe (strain 972 / ATCC 24843) (Fission yeast)).